Reading from the N-terminus, the 305-residue chain is Epoxyqueuosine reductase (305 aa).

Asp128 acts as the Proton donor in catalysis. The region spanning 170-202 is the 4Fe-4S ferredoxin-type domain; the sequence is LSLTSDTPHAKYCGTCRKCLDICPTKAIVHPFV. Cys182, Cys185, Cys188, Cys192, Cys208, Cys236, Cys239, and Cys243 together coordinate [4Fe-4S] cluster.

Belongs to the QueG family. As to quaternary structure, monomer. It depends on cob(II)alamin as a cofactor. [4Fe-4S] cluster is required as a cofactor.

The protein localises to the cytoplasm. The catalysed reaction is epoxyqueuosine(34) in tRNA + AH2 = queuosine(34) in tRNA + A + H2O. The protein operates within tRNA modification; tRNA-queuosine biosynthesis. In terms of biological role, catalyzes the conversion of epoxyqueuosine (oQ) to queuosine (Q), which is a hypermodified base found in the wobble positions of tRNA(Asp), tRNA(Asn), tRNA(His) and tRNA(Tyr). This Atelocyanobacterium thalassa (isolate ALOHA) protein is Epoxyqueuosine reductase.